Here is a 76-residue protein sequence, read N- to C-terminus: Histone acetyltransferase (76 aa).

In terms of assembly, physically interacts with histone H3 in infected macrophages.

The protein resides in the secreted. It localises to the host cytoplasm. It is found in the host nucleus. The catalysed reaction is L-lysyl-[protein] + acetyl-CoA = N(6)-acetyl-L-lysyl-[protein] + CoA + H(+). Its activity is regulated as follows. Is completely inhibited by anacardic acid, an inhibitor of HAT activity. Its function is as follows. Histone acetyltransferase, which by binding to the host chromatin, may manipulate the expression of host genes involved in anti-inflammatory responses to evade clearance and to survive in the intracellular milieu. Acetylates histone H3 at the 'Lys-9' and 'Lys-14' positions. This is Histone acetyltransferase from Mycobacterium tuberculosis (strain CDC 1551 / Oshkosh).